The primary structure comprises 281 residues: Phosphonates import ATP-binding protein PhnC 2 (281 aa).

An ABC transporter domain is found at 4–238 (LTVDNVTKTY…LVDDLYGNVE (235 aa)). Residue 35–42 (GESGAGKS) coordinates ATP. The interval 243–281 (ATDNSDNSTVDTSDGTRYDTETGSDGTDEVDVIGRQVES) is disordered. The segment covering 244-255 (TDNSDNSTVDTS) has biased composition (low complexity).

The protein belongs to the ABC transporter superfamily. Phosphonates importer (TC 3.A.1.9.1) family. The complex is composed of two ATP-binding proteins (PhnC), two transmembrane proteins (PhnE) and a solute-binding protein (PhnD).

Its subcellular location is the cell membrane. It catalyses the reaction phosphonate(out) + ATP + H2O = phosphonate(in) + ADP + phosphate + H(+). In terms of biological role, part of the ABC transporter complex PhnCDE involved in phosphonates import. Responsible for energy coupling to the transport system. The protein is Phosphonates import ATP-binding protein PhnC 2 of Haloquadratum walsbyi (strain DSM 16790 / HBSQ001).